We begin with the raw amino-acid sequence, 105 residues long: Thioredoxin (105 aa).

Residues 2–105 (VKQIESKSAF…KLEATINELL (104 aa)) form the Thioredoxin domain. The residue at position 3 (Lys-3) is an N6-acetyllysine. At Lys-8 the chain carries N6-succinyllysine. Catalysis depends on nucleophile residues Cys-32 and Cys-35. The cysteines at positions 32 and 35 are disulfide-linked. Lys-39 bears the N6-acetyllysine mark. Cys-62 and Cys-69 each carry S-nitrosocysteine. Cys-73 carries the S-nitrosocysteine; alternate modification. Lys-94 carries the post-translational modification N6-acetyllysine; alternate. Lys-94 carries the post-translational modification N6-succinyllysine; alternate.

Belongs to the thioredoxin family. In terms of assembly, homodimer; disulfide-linked. Interacts with TXNIP through the redox-active site. Interacts with MAP3K5 and CASP3. Interacts with APEX1; the interaction stimulates the FOS/JUN AP-1 DNA-binding activity in a redox-dependent manner. In terms of processing, in the fully reduced protein, both Cys-69 and Cys-73 are nitrosylated in response to nitric oxide (NO). When two disulfide bonds are present in the protein, only Cys-73 is nitrosylated. Cys-73 can serve as donor for nitrosylation of target proteins.

The protein localises to the nucleus. It is found in the cytoplasm. It localises to the secreted. In terms of biological role, participates in various redox reactions through the reversible oxidation of its active center dithiol to a disulfide and catalyzes dithiol-disulfide exchange reactions. Plays a role in the reversible S-nitrosylation of cysteine residues in target proteins, and thereby contributes to the response to intracellular nitric oxide. Nitrosylates the active site Cys of CASP3 in response to nitric oxide (NO), and thereby inhibits caspase-3 activity. Induces the FOS/JUN AP-1 DNA binding activity in ionizing radiation (IR) cells through its oxidation/reduction status and stimulates AP-1 transcriptional activity. The chain is Thioredoxin (TXN) from Oryctolagus cuniculus (Rabbit).